A 447-amino-acid polypeptide reads, in one-letter code: Protein chibby homolog 2 (447 aa).

8 positions are modified to phosphoserine: serine 41, serine 85, serine 88, serine 96, serine 123, serine 143, serine 147, and serine 149. Residues 164 to 197 (EYLLQEENKSLRDENRALRDENKALRKENKILQV) adopt a coiled-coil conformation. Disordered regions lie at residues 208 to 244 (HEESQTSSPLLHKDTTSQEVVKKDNATLPAQRSKENT) and 266 to 320 (WAQA…EDSK). Residues serine 211 and serine 224 each carry the phosphoserine modification. A compositionally biased stretch (basic and acidic residues) spans 218–232 (LHKDTTSQEVVKKDN). Positions 237 to 264 (AQRSKENTLQFIREENRALQQLLEQRQA) form a coiled coil. A compositionally biased stretch (low complexity) spans 266 to 276 (WAQAEESATSA). Phosphoserine occurs at positions 272 and 275. Positions 277–290 (EEGKPTSSPKEEPH) are enriched in basic and acidic residues. 2 positions are modified to phosphoserine: serine 333 and serine 336. The stretch at 354–412 (LQLLREMNQALQALREENRLLQEENRALHAMREEHRVFQEENKALWENNKLKLQQRLVI) forms a coiled coil.

It belongs to the chibby family. SPERT subfamily. In terms of assembly, homodimer. Binds to NEK1.

In Rattus norvegicus (Rat), this protein is Protein chibby homolog 2 (Cby2).